The chain runs to 849 residues: MFSKNKHNTKFIVIACVIVVLILILFCLDFQNIQEIIETINQLTNNQNPSQNTASEMSGMRRKIIFFIFNFFGKIILASFVISFLLHIKKNAQIKRLKNKLSLWSKLSFHVSQIGEEVLNELPIGIVLIDISSQEIQWLNPYASFILKNPEINSPLAQINENMAQLISTSDAIPKTIITLENKKFECFYKKDLNVFYLFDATEKEQIKHLFLQKTLALAMITFDNLAESLIRYDLSEQSQIQGEYLSALSDYIEPYEGYLKQLIDDRFLLLLNRQNLDKMLENKFIILDTIRNISYKYQLKVTLSMGIACWNLSYEKLATYSQNAIELAQKRGGDQVVVNIENEKIKYFGAKIASLSKQSKVHARINAQNLVDILKKHPHCFIMGHTHTDLDALGSVIAFYKIATTIHPESNNYIILDEEKLDKSLIPVYNQLIKTEAKTSLNIITTQQASKMIKDNSLIAVLDTQTKDMVNSPELLSLTSNVVVVDHHRATEEIIPSIFSYVESSASSTVELLVEVMGFLEKEVHITAFEASIMYAGILIDTNAFIYRTSSRTFEVASKLKDLGADAIEVKSWLRKDFDKVLEINKLISEMEIFMDRFAIIQSSEIYENRSFLAQVAEGVLNIRNVDAAFMIAQIADNKIAISARSYNEINVQTIMEQMEGGGHLNSAATQLEGTNIKTVTDTLKHFLKLEYEKGEKNMEIILLTDIPNKGKKHEIIKVNNGYGNFLIQNKKALLADKTNLAAIKQSQMLEQEQKRNHELLMHKLKQEIDDKKITLDIQLGPKGKIYGKITLKQIAEEFLKVHNITLDRKKISLEGEIIAIGIYPVDVFLTDQIKATFFLNVTERKSK.

A unknown region spans residues 1–680 (MFSKNKHNTK…TQLEGTNIKT (680 aa)). A run of 2 helical transmembrane segments spans residues 11–31 (FIVI…LDFQ) and 64–84 (IIFF…VISF). One can recognise a GGDEF domain in the interval 214–342 (KTLALAMITF…GGDQVVVNIE (129 aa)). A large ribosomal subunit protein bL9 region spans residues 681-849 (VTDTLKHFLK…FLNVTERKSK (169 aa)).

Belongs to the bacterial ribosomal protein bL9 family.

The protein localises to the cell membrane. Its function is as follows. Binds to the 23S rRNA. This Onion yellows phytoplasma (strain OY-M) protein is Membrane protein-large ribosomal subunit bL9 fusion protein.